The sequence spans 261 residues: ClpXP adapter protein SpxH (261 aa).

This sequence belongs to the SpxH family. In terms of assembly, interacts with Spx.

It localises to the cytoplasm. Functionally, adapter protein required for efficient degradation of Spx by ClpXP under non-stress conditions. Interaction with Spx stabilizes Spx and exposes the C-terminus of Spx for recognition and proteolysis by ClpXP. The sequence is that of ClpXP adapter protein SpxH from Staphylococcus aureus.